The primary structure comprises 1401 residues: DNA-directed RNA polymerase subunit beta' (1401 aa).

The Zn(2+) site is built by cysteine 70, cysteine 72, cysteine 85, and cysteine 88. 3 residues coordinate Mg(2+): aspartate 460, aspartate 462, and aspartate 464. Residues cysteine 808, cysteine 882, cysteine 889, and cysteine 892 each coordinate Zn(2+).

This sequence belongs to the RNA polymerase beta' chain family. In terms of assembly, the RNAP catalytic core consists of 2 alpha, 1 beta, 1 beta' and 1 omega subunit. When a sigma factor is associated with the core the holoenzyme is formed, which can initiate transcription. Requires Mg(2+) as cofactor. It depends on Zn(2+) as a cofactor.

The catalysed reaction is RNA(n) + a ribonucleoside 5'-triphosphate = RNA(n+1) + diphosphate. DNA-dependent RNA polymerase catalyzes the transcription of DNA into RNA using the four ribonucleoside triphosphates as substrates. This chain is DNA-directed RNA polymerase subunit beta', found in Legionella pneumophila (strain Lens).